The chain runs to 259 residues: Phosphoadenosine 5'-phosphosulfate reductase (259 aa).

The Nucleophile; cysteine thiosulfonate intermediate role is filled by cysteine 244.

Belongs to the PAPS reductase family. CysH subfamily.

Its subcellular location is the cytoplasm. The enzyme catalyses [thioredoxin]-disulfide + sulfite + adenosine 3',5'-bisphosphate + 2 H(+) = [thioredoxin]-dithiol + 3'-phosphoadenylyl sulfate. It functions in the pathway sulfur metabolism; hydrogen sulfide biosynthesis; sulfite from sulfate: step 3/3. Its function is as follows. Catalyzes the formation of sulfite from phosphoadenosine 5'-phosphosulfate (PAPS) using thioredoxin as an electron donor. The polypeptide is Phosphoadenosine 5'-phosphosulfate reductase (Vibrio parahaemolyticus serotype O3:K6 (strain RIMD 2210633)).